The sequence spans 470 residues: UDP-N-acetylmuramoylalanine--D-glutamate ligase (470 aa).

121–127 (GTNGKST) serves as a coordination point for ATP.

The protein belongs to the MurCDEF family.

The protein resides in the cytoplasm. It catalyses the reaction UDP-N-acetyl-alpha-D-muramoyl-L-alanine + D-glutamate + ATP = UDP-N-acetyl-alpha-D-muramoyl-L-alanyl-D-glutamate + ADP + phosphate + H(+). Its pathway is cell wall biogenesis; peptidoglycan biosynthesis. In terms of biological role, cell wall formation. Catalyzes the addition of glutamate to the nucleotide precursor UDP-N-acetylmuramoyl-L-alanine (UMA). The chain is UDP-N-acetylmuramoylalanine--D-glutamate ligase from Rhizobium johnstonii (strain DSM 114642 / LMG 32736 / 3841) (Rhizobium leguminosarum bv. viciae).